The primary structure comprises 1810 residues: Trinucleotide repeat-containing gene 6B protein (1810 aa).

Acidic residues predominate over residues 1 to 22 (MQTNEGEVEEESSSQVEQEDFV). 4 disordered regions span residues 1–221 (MQTN…PNPI), 235–1080 (EEWP…KKQM), 1141–1196 (MRKD…SSPG), and 1293–1329 (ALQQ…NMVP). Positions 33–75 (GEESKQEKEQEREEQLMEDKKRKKEDKKKKEATQKVTEQKTKV) form a coiled coil. 2 stretches are compositionally biased toward basic and acidic residues: residues 34–52 (EESK…MEDK) and 60–77 (KKKE…KVPE). An interaction with argonaute proteins region spans residues 37–1028 (KQEKEQEREE…AMKPNSKSMQ (992 aa)). Positions 88-106 (AASPIGSSPSPPVNGGNNA) are enriched in low complexity. Positions 123-139 (MPREVPPRFRCQQDHKV) are enriched in basic and acidic residues. The segment covering 165 to 174 (APGANPNNNA) has biased composition (low complexity). Positions 180–190 (LLQSESGTAPE) are enriched in polar residues. 2 stretches are compositionally biased toward low complexity: residues 207-220 (GPGA…SPNP) and 248-260 (SSEN…SASN). Polar residues-rich tracts occupy residues 261–290 (PGSE…SGNE) and 306–327 (QPPN…TSGQ). Composition is skewed to low complexity over residues 335–346 (GFSNFNPNSNPS), 363–380 (ETES…GQAS), and 416–425 (NSLNLSSPNP). Over residues 438–451 (GNTSRSTDAPSQST) the composition is skewed to polar residues. Residues 475–486 (SGQSNSGNNGNN) show a composition bias toward low complexity. Polar residues-rich tracts occupy residues 504-528 (GSKS…PQDN), 564-575 (GPNQPNSSTGAW), 611-623 (TGSN…SDSH), and 655-667 (LSNT…QIKQ). Basic and acidic residues predominate over residues 675 to 688 (EVPRPEGKSDKGTE). Composition is skewed to polar residues over residues 774 to 783 (QPNQGWTSGK) and 793 to 804 (VKNNNWESSANK). The span at 809 to 824 (WGEGGQNEIGTWGNGG) shows a compositional bias: gly residues. Polar residues predominate over residues 846–857 (TGRQPNSWNKQH). Serine 913 carries the phosphoserine modification. Polar residues-rich tracts occupy residues 934–950 (NSYN…NSQG), 964–975 (TGKSASVWSKST), 1004–1027 (ASTT…SKSM), 1057–1072 (TAGS…SASW), and 1175–1195 (GNST…SSSP). Residues 1191-1700 (LSSSPGLRAQ…LAEFATEDEV (510 aa)) form a silencing domain; interaction with CNOT1 and PAN3 region. A compositionally biased stretch (low complexity) spans 1295 to 1307 (QQQQQQQQQQQRQ). Serine 1409 carries the post-translational modification Phosphoserine. Threonine 1426 carries the post-translational modification Phosphothreonine. Residue serine 1438 is modified to Phosphoserine. The residue at position 1441 (threonine 1441) is a Phosphothreonine. The PABPC1-interacting motif-2 (PAM2) stretch occupies residues 1449-1467 (SNASWPPEFQPGVPWKGIQ). The tract at residues 1568–1619 (SSRNTTPLTRPPPGLTNPKPASPWSSTAPRSVRGWGTQDSRIASASTWSDGG) is disordered. The segment covering 1604-1617 (TQDSRIASASTWSD) has biased composition (polar residues). Residues 1625–1697 (YWLVLHNLTP…TTILAEFATE (73 aa)) form the RRM domain. Disordered stretches follow at residues 1706-1740 (QAQP…GPAL) and 1786-1810 (EDPH…SDSI). Polar residues predominate over residues 1722–1733 (GWQSLETSQNQA). Residues 1792 to 1801 (GSPAPLLPGD) are compositionally biased toward low complexity. Phosphoserine occurs at positions 1793 and 1809.

This sequence belongs to the GW182 family. In terms of assembly, interacts with AGO1, AGO2, AGO3 and AGO4. Interacts with CNOT1; the interaction mediates the association with the CCR4-NOT complex. Interacts with PAN3; the interaction mediates the association with the PAN complex. Interacts with MOV10; the interaction is direct and RNA-dependent.

The protein localises to the cytoplasm. It is found in the P-body. Functionally, plays a role in RNA-mediated gene silencing by both micro-RNAs (miRNAs) and short interfering RNAs (siRNAs). Required for miRNA-dependent translational repression and siRNA-dependent endonucleolytic cleavage of complementary mRNAs by argonaute family proteins. As scaffolding protein associates with argonaute proteins bound to partially complementary mRNAs and simultaneously can recruit CCR4-NOT and PAN deadenylase complexes. The chain is Trinucleotide repeat-containing gene 6B protein (Tnrc6b) from Mus musculus (Mouse).